We begin with the raw amino-acid sequence, 121 residues long: Small ribosomal subunit protein uS13 (121 aa).

Positions 94–121 (GLPVRGQNTKNNARTRKGPRRTVANKKK) are disordered. The segment covering 106-121 (ARTRKGPRRTVANKKK) has biased composition (basic residues).

The protein belongs to the universal ribosomal protein uS13 family. Part of the 30S ribosomal subunit. Forms a loose heterodimer with protein S19. Forms two bridges to the 50S subunit in the 70S ribosome.

Functionally, located at the top of the head of the 30S subunit, it contacts several helices of the 16S rRNA. In the 70S ribosome it contacts the 23S rRNA (bridge B1a) and protein L5 of the 50S subunit (bridge B1b), connecting the 2 subunits; these bridges are implicated in subunit movement. Contacts the tRNAs in the A and P-sites. The chain is Small ribosomal subunit protein uS13 from Geobacillus kaustophilus (strain HTA426).